The chain runs to 189 residues: GMP synthase [glutamine-hydrolyzing] subunit A (189 aa).

In terms of domain architecture, Glutamine amidotransferase type-1 spans 5–189; that stretch reads KILVVNNYGQ…MNFFEVCDLY (185 aa). Cys79 (nucleophile) is an active-site residue. Residues His166 and Glu168 contribute to the active site.

As to quaternary structure, heterodimer composed of a glutamine amidotransferase subunit (A) and a GMP-binding subunit (B).

It catalyses the reaction XMP + L-glutamine + ATP + H2O = GMP + L-glutamate + AMP + diphosphate + 2 H(+). Its pathway is purine metabolism; GMP biosynthesis; GMP from XMP (L-Gln route): step 1/1. Functionally, catalyzes the synthesis of GMP from XMP. In Methanosarcina mazei (strain ATCC BAA-159 / DSM 3647 / Goe1 / Go1 / JCM 11833 / OCM 88) (Methanosarcina frisia), this protein is GMP synthase [glutamine-hydrolyzing] subunit A.